The sequence spans 437 residues: Phosphomethylpyrimidine synthase (437 aa).

Substrate contacts are provided by residues Asn-69, Met-98, Tyr-127, His-163, 185-187 (SRG), 226-229 (DACR), and Glu-265. His-269 contacts Zn(2+). Tyr-292 is a substrate binding site. His-333 serves as a coordination point for Zn(2+). Cys-409, Cys-412, and Cys-416 together coordinate [4Fe-4S] cluster.

It belongs to the ThiC family. [4Fe-4S] cluster serves as cofactor.

The catalysed reaction is 5-amino-1-(5-phospho-beta-D-ribosyl)imidazole + S-adenosyl-L-methionine = 4-amino-2-methyl-5-(phosphooxymethyl)pyrimidine + CO + 5'-deoxyadenosine + formate + L-methionine + 3 H(+). It participates in cofactor biosynthesis; thiamine diphosphate biosynthesis. Catalyzes the synthesis of the hydroxymethylpyrimidine phosphate (HMP-P) moiety of thiamine from aminoimidazole ribotide (AIR) in a radical S-adenosyl-L-methionine (SAM)-dependent reaction. This chain is Phosphomethylpyrimidine synthase, found in Clostridium botulinum (strain Langeland / NCTC 10281 / Type F).